Reading from the N-terminus, the 391-residue chain is Alanine racemase (391 aa).

Lysine 46 functions as the Proton acceptor; specific for D-alanine in the catalytic mechanism. Lysine 46 carries the N6-(pyridoxal phosphate)lysine modification. Arginine 148 is a binding site for substrate. Tyrosine 283 (proton acceptor; specific for L-alanine) is an active-site residue. Methionine 331 contacts substrate.

The protein belongs to the alanine racemase family. Pyridoxal 5'-phosphate is required as a cofactor.

It catalyses the reaction L-alanine = D-alanine. It functions in the pathway amino-acid biosynthesis; D-alanine biosynthesis; D-alanine from L-alanine: step 1/1. In terms of biological role, catalyzes the interconversion of L-alanine and D-alanine. May also act on other amino acids. The sequence is that of Alanine racemase (alr) from Streptomyces coelicolor (strain ATCC BAA-471 / A3(2) / M145).